A 454-amino-acid polypeptide reads, in one-letter code: Epoxide hydrolase 1 (454 aa).

Residues 1–21 (MWLEILLASVLGFVIYWFVSK) traverse the membrane as a helical segment. Residues 22–454 (DKEETLLLGD…RKFMGLLEQQ (433 aa)) are Cytoplasmic-facing. D226 serves as the catalytic Nucleophile. Position 294 is a dimethylated arginine (R294). Y373 functions as the Proton donor in the catalytic mechanism. H430 acts as the Proton acceptor in catalysis.

It belongs to the peptidase S33 family.

Its subcellular location is the microsome membrane. It is found in the endoplasmic reticulum membrane. It carries out the reaction cis-stilbene oxide + H2O = (1R,2R)-hydrobenzoin. It catalyses the reaction 1-(4-methoxyphenyl)-N-methyl-N-[(3-methyloxetan-3-yl)methyl]methanamine + H2O = 2-{[(4-methoxybenzyl)(methyl)amino]methyl}-2-methylpropane-1,3-diol. The enzyme catalyses 8,9-epoxy-(5Z,11Z,14Z)-eicosatrienoate + H2O = 8,9-dihydroxy-(5Z,11Z,14Z)-eicosatrienoate. The catalysed reaction is 11,12-epoxy-(5Z,8Z,14Z)-eicosatrienoate + H2O = 11,12-dihydroxy-(5Z,8Z,14Z)-eicosatrienoate. It carries out the reaction 2-(5Z,8Z,11Z,14Z-eicosatetraenoyl)-glycerol + H2O = glycerol + (5Z,8Z,11Z,14Z)-eicosatetraenoate + H(+). With respect to regulation, inhibited by 10-hydroxystearamide and methoxy-arachidonyl fluorophosphate. Biotransformation enzyme that catalyzes the hydrolysis of arene and aliphatic epoxides to less reactive and more water soluble dihydrodiols by the trans addition of water. May play a role in the metabolism of endogenous lipids such as epoxide-containing fatty acids. Metabolizes the abundant endocannabinoid 2-arachidonoylglycerol (2-AG) to free arachidonic acid (AA) and glycerol. Binds 20(S)-hydroxycholesterol (20(S)-OHC). In Sus scrofa (Pig), this protein is Epoxide hydrolase 1 (EPHX1).